Here is a 91-residue protein sequence, read N- to C-terminus: Small ribosomal subunit protein uS19 (91 aa).

This sequence belongs to the universal ribosomal protein uS19 family.

Functionally, protein S19 forms a complex with S13 that binds strongly to the 16S ribosomal RNA. The sequence is that of Small ribosomal subunit protein uS19 from Colwellia psychrerythraea (strain 34H / ATCC BAA-681) (Vibrio psychroerythus).